The following is a 335-amino-acid chain: Biotin synthase (335 aa).

Residues 46-274 form the Radical SAM core domain; the sequence is YDIQLASLFS…KSKIRLSAGR (229 aa). The [4Fe-4S] cluster site is built by Cys-61, Cys-65, and Cys-68. [2Fe-2S] cluster contacts are provided by Cys-105, Cys-137, Cys-197, and Arg-269.

This sequence belongs to the radical SAM superfamily. Biotin synthase family. Homodimer. It depends on [4Fe-4S] cluster as a cofactor. Requires [2Fe-2S] cluster as cofactor.

The enzyme catalyses (4R,5S)-dethiobiotin + (sulfur carrier)-SH + 2 reduced [2Fe-2S]-[ferredoxin] + 2 S-adenosyl-L-methionine = (sulfur carrier)-H + biotin + 2 5'-deoxyadenosine + 2 L-methionine + 2 oxidized [2Fe-2S]-[ferredoxin]. It functions in the pathway cofactor biosynthesis; biotin biosynthesis; biotin from 7,8-diaminononanoate: step 2/2. Catalyzes the conversion of dethiobiotin (DTB) to biotin by the insertion of a sulfur atom into dethiobiotin via a radical-based mechanism. The polypeptide is Biotin synthase (Prochlorococcus marinus (strain MIT 9215)).